The chain runs to 677 residues: Regulator of G-protein signaling 9 (677 aa).

The 76-residue stretch at 30–105 folds into the DEP domain; sequence PETGVRMQNQ…PDSSLYRFQT (76 aa). A G protein gamma domain is found at 219–280; the sequence is VTAVRKEIMY…ITDDTQFWDL (62 aa). Residues 295-416 enclose the RGS domain; sequence RWAFNFSELI…SPIYKEMLAK (122 aa). Disordered regions lie at residues 530–571 and 639–677; these read SSGL…RAPL and DSGPCLMDSDDPGAGESGDQTTEKEVICPWESLAEGKAG.

In terms of assembly, heterodimer with GNB5. Interacts with RGS7BP, leading to regulate the subcellular location of the heterodimer formed with GNB5. Component of the RGS9-1-Gbeta5 complex composed of RGS9 (RGS9-1), Gbeta5 (GNB5) and RGS9BP. Interacts with PDE6G and GNAT1. As to expression, expressed in the central nervous system. Isoform RGS9L is found in striatum, hypothalamus and nucleus accumbens while isoform RGS9S is expressed in retina and pineal gland.

It localises to the membrane. In terms of biological role, inhibits signal transduction by increasing the GTPase activity of G protein alpha subunits thereby driving them into their inactive GDP-bound form. Binds to GNAT1. Involved in phototransduction; key element in the recovery phase of visual transduction. This Rattus norvegicus (Rat) protein is Regulator of G-protein signaling 9 (Rgs9).